Consider the following 1242-residue polypeptide: DNA-directed RNA polymerase RPB2 homolog (1242 aa).

The C4-type zinc finger occupies Cys-1180–Cys-1201.

Belongs to the RNA polymerase beta chain family. In terms of assembly, part of the viral DNA-directed RNA polymerase that consists of 8 polII-like subunits (RPB1, RPB2, RPB3, RPB5, RPB6, RPB7, RPB9, RPB10), a capping enzyme and a termination factor.

The protein localises to the host cytoplasm. It localises to the virion. It carries out the reaction RNA(n) + a ribonucleoside 5'-triphosphate = RNA(n+1) + diphosphate. In terms of biological role, catalytic component of the DNA-directed RNA polymerase (RNAP) that catalyzes the transcription in the cytoplasm of viral DNA into RNA using the four ribonucleoside triphosphates as substrates. Forms the polymerase active center together with RPB1. Part of the core element with the central large cleft, the clamp element that moves to open and close the cleft and the jaws that are thought to grab the incoming DNA template. This is DNA-directed RNA polymerase RPB2 homolog from African swine fever virus (isolate Tick/Malawi/Lil 20-1/1983) (ASFV).